Reading from the N-terminus, the 288-residue chain is Elongation factor Ts (288 aa).

The tract at residues 82-85 (TDFV) is involved in Mg(2+) ion dislocation from EF-Tu.

The protein belongs to the EF-Ts family.

It localises to the cytoplasm. Functionally, associates with the EF-Tu.GDP complex and induces the exchange of GDP to GTP. It remains bound to the aminoacyl-tRNA.EF-Tu.GTP complex up to the GTP hydrolysis stage on the ribosome. The protein is Elongation factor Ts of Chlorobium phaeobacteroides (strain BS1).